We begin with the raw amino-acid sequence, 251 residues long: HTH-type transcriptional regulator UlaR (251 aa).

Residues 3–58 (EAQRHQILLEMLAQLGFVTVEKVVERLGISPATARRDINKLDESGKLKKVRNGAEA) form the HTH deoR-type domain. The segment at residues 20 to 39 (VTVEKVVERLGISPATARRD) is a DNA-binding region (H-T-H motif).

The protein resides in the cytoplasm. In terms of biological role, represses ulaG and the ulaABCDEF operon. The chain is HTH-type transcriptional regulator UlaR from Shigella dysenteriae serotype 1 (strain Sd197).